The following is a 411-amino-acid chain: Probable UDP-arabinose 4-epimerase 3 (411 aa).

The segment covering 1–13 (MLSFSRARSQGRN) has biased composition (polar residues). A disordered region spans residues 1–22 (MLSFSRARSQGRNTRPLGGGME). The Cytoplasmic portion of the chain corresponds to 1-31 (MLSFSRARSQGRNTRPLGGGMEYLEPKRKSN). A helical; Signal-anchor for type II membrane protein membrane pass occupies residues 32 to 50 (VMGKIILVVSLTALCIFML). Over 51-411 (KHAPSFTSPT…KTHPHGYASS (361 aa)) the chain is Lumenal. 71–102 (HVLVTGGAGYIGSHAALRLLKDSYRVTIVDNL) is a binding site for NAD(+). The active-site Proton acceptor is the Tyr219.

Belongs to the NAD(P)-dependent epimerase/dehydratase family. NAD(+) is required as a cofactor.

It is found in the golgi apparatus. The protein localises to the golgi stack membrane. It carries out the reaction UDP-beta-L-arabinopyranose = UDP-alpha-D-xylose. It functions in the pathway nucleotide-sugar biosynthesis; UDP-L-arabinose biosynthesis; UDP-L-arabinose from UDP-alpha-D-xylose: step 1/1. The protein operates within cell wall biogenesis; cell wall polysaccharide biosynthesis. This Arabidopsis thaliana (Mouse-ear cress) protein is Probable UDP-arabinose 4-epimerase 3.